A 528-amino-acid chain; its full sequence is Endoglucanase 24 (528 aa).

Residues 1-24 (MGSKTKGCCGWLIVALVASLVATA) form the signal peptide. Aspartate 109 serves as the catalytic Nucleophile. Asparagine 259 carries N-linked (GlcNAc...) asparagine glycosylation. The active site involves histidine 446. Asparagine 487 is a glycosylation site (N-linked (GlcNAc...) asparagine). Residues aspartate 492 and glutamate 501 contribute to the active site.

This sequence belongs to the glycosyl hydrolase 9 (cellulase E) family.

Its subcellular location is the secreted. The enzyme catalyses Endohydrolysis of (1-&gt;4)-beta-D-glucosidic linkages in cellulose, lichenin and cereal beta-D-glucans.. This is Endoglucanase 24 from Oryza sativa subsp. japonica (Rice).